Consider the following 265-residue polypeptide: Mlc titration factor A (265 aa).

4 residues coordinate Zn(2+): histidine 111, histidine 148, histidine 152, and glutamate 211.

It belongs to the MtfA family. Interacts with Mlc. Zn(2+) serves as cofactor.

It is found in the cytoplasm. Its function is as follows. Involved in the modulation of the activity of the glucose-phosphotransferase system (glucose-PTS). Interacts with the transcriptional repressor Mlc, preventing its interaction with DNA and leading to the modulation of expression of genes regulated by Mlc, including ptsG, which encodes the PTS system glucose-specific EIICB component. Functionally, shows zinc-dependent metallopeptidase activity. In Enterobacter sp. (strain 638), this protein is Mlc titration factor A.